Here is a 478-residue protein sequence, read N- to C-terminus: PRAME family member 15 (478 aa).

The stretch at 99–126 (RWKLQVLDLQDVCENFWMVWSEAMAHGC) is one LRR 1; degenerate repeat. The LRR 2; degenerate repeat unit spans residues 181–205 (HLCCKKLKILGMPFRNIRSILKMVN). The stretch at 206 to 232 (LDCIQEVEVNCKWVLPILTQFTPYLGH) is one LRR 3; degenerate repeat. An LRR 4; degenerate repeat occupies 233 to 268 (MRNLQKLVLSHMDVSRYVSPEQKKEIVTQFTTQFLK). 5 LRR repeats span residues 269–294 (LRCL…LSCL), 295–326 (KTSL…SQLK), 327–347 (TLDL…QILL), 351–378 (AATL…ALSR), and 379–403 (CFEL…LLSH).

Belongs to the PRAME family.

The sequence is that of PRAME family member 15 from Homo sapiens (Human).